The chain runs to 265 residues: 5'-nucleotidase SurE (265 aa).

The a divalent metal cation site is built by Asp-8, Asp-9, Ser-41, and Asn-100.

It belongs to the SurE nucleotidase family. It depends on a divalent metal cation as a cofactor.

Its subcellular location is the cytoplasm. The enzyme catalyses a ribonucleoside 5'-phosphate + H2O = a ribonucleoside + phosphate. Nucleotidase that shows phosphatase activity on nucleoside 5'-monophosphates. The polypeptide is 5'-nucleotidase SurE (Brevibacillus brevis (strain 47 / JCM 6285 / NBRC 100599)).